A 159-amino-acid chain; its full sequence is 2-C-methyl-D-erythritol 2,4-cyclodiphosphate synthase (159 aa).

Residues Asp10 and His12 each coordinate a divalent metal cation. Residues 10–12 (DVH) and 36–37 (HS) each bind 4-CDP-2-C-methyl-D-erythritol 2-phosphate. His44 lines the a divalent metal cation pocket. Residues 58–60 (DIG) and Arg144 each bind 4-CDP-2-C-methyl-D-erythritol 2-phosphate.

It belongs to the IspF family. As to quaternary structure, homotrimer. Requires a divalent metal cation as cofactor.

It catalyses the reaction 4-CDP-2-C-methyl-D-erythritol 2-phosphate = 2-C-methyl-D-erythritol 2,4-cyclic diphosphate + CMP. It participates in isoprenoid biosynthesis; isopentenyl diphosphate biosynthesis via DXP pathway; isopentenyl diphosphate from 1-deoxy-D-xylulose 5-phosphate: step 4/6. Functionally, involved in the biosynthesis of isopentenyl diphosphate (IPP) and dimethylallyl diphosphate (DMAPP), two major building blocks of isoprenoid compounds. Catalyzes the conversion of 4-diphosphocytidyl-2-C-methyl-D-erythritol 2-phosphate (CDP-ME2P) to 2-C-methyl-D-erythritol 2,4-cyclodiphosphate (ME-CPP) with a corresponding release of cytidine 5-monophosphate (CMP). The chain is 2-C-methyl-D-erythritol 2,4-cyclodiphosphate synthase from Paraburkholderia phymatum (strain DSM 17167 / CIP 108236 / LMG 21445 / STM815) (Burkholderia phymatum).